Reading from the N-terminus, the 301-residue chain is uncharacterized protein (301 aa).

Residue Thr47 is the Charge relay system of the active site. Residue Tyr136 is the Proton donor of the active site. Residue Lys165 is the Schiff-base intermediate with substrate of the active site.

This sequence belongs to the DapA family. In terms of assembly, homotetramer.

The protein resides in the cytoplasm. This is an uncharacterized protein from Thermofilum pendens (strain DSM 2475 / Hrk 5).